Consider the following 615-residue polypeptide: DNA mismatch repair protein MutL (615 aa).

The protein belongs to the DNA mismatch repair MutL/HexB family.

Functionally, this protein is involved in the repair of mismatches in DNA. It is required for dam-dependent methyl-directed DNA mismatch repair. May act as a 'molecular matchmaker', a protein that promotes the formation of a stable complex between two or more DNA-binding proteins in an ATP-dependent manner without itself being part of a final effector complex. This is DNA mismatch repair protein MutL from Parabacteroides distasonis (strain ATCC 8503 / DSM 20701 / CIP 104284 / JCM 5825 / NCTC 11152).